Consider the following 713-residue polypeptide: Probable muscarinic acetylcholine receptor gar-1 (713 aa).

At methionine 1–serine 20 the chain is on the extracellular side. Residue asparagine 3 is glycosylated (N-linked (GlcNAc...) asparagine). Residues isoleucine 21–glycine 41 traverse the membrane as a helical segment. Over asparagine 42 to serine 66 the chain is Cytoplasmic. Residues leucine 67–leucine 87 traverse the membrane as a helical segment. At asparagine 88–threonine 101 the chain is on the extracellular side. A disulfide bridge links cysteine 99 with cysteine 180. The helical transmembrane segment at tryptophan 102 to alanine 122 threads the bilayer. Residues aspartate 123–glutamine 144 are Cytoplasmic-facing. The chain crosses the membrane as a helical span at residues leucine 145–tryptophan 165. The Extracellular portion of the chain corresponds to glutamine 166 to tyrosine 189. The chain crosses the membrane as a helical span at residues valine 190–tyrosine 210. The Cytoplasmic segment spans residues lysine 211–lysine 633. 4 disordered regions span residues lysine 256–cysteine 350, serine 381–alanine 403, lysine 427–glutamate 475, and leucine 515–phenylalanine 585. 2 stretches are compositionally biased toward polar residues: residues serine 266–aspartate 275 and proline 287–asparagine 315. 2 stretches are compositionally biased toward basic and acidic residues: residues glutamate 320–asparagine 333 and histidine 393–alanine 403. The segment covering threonine 429–serine 439 has biased composition (low complexity). The segment covering arginine 444–serine 457 has biased composition (basic residues). The segment covering leucine 557–proline 571 has biased composition (polar residues). Residues alanine 634–alanine 656 traverse the membrane as a helical segment. Topologically, residues threonine 657–phenylalanine 670 are extracellular. The helical transmembrane segment at leucine 671–alanine 693 threads the bilayer. Residues asparagine 694–alanine 713 lie on the Cytoplasmic side of the membrane.

It belongs to the G-protein coupled receptor 1 family. Muscarinic acetylcholine receptor subfamily. As to expression, expressed in head region of the larva. In adults, expression is seen in the periventricularis magnocellularis (PVM) neuron.

Its subcellular location is the cell membrane. Functionally, the muscarinic acetylcholine receptor mediates various cellular responses, including inhibition of adenylate cyclase, breakdown of phosphoinositides and modulation of potassium channels through the action of G proteins. Primary transducing effect is Pi turnover. The chain is Probable muscarinic acetylcholine receptor gar-1 (gar-1) from Caenorhabditis elegans.